A 423-amino-acid polypeptide reads, in one-letter code: COP9 signalosome complex subunit 3 (423 aa).

Ala2 carries the N-acetylalanine modification. In terms of domain architecture, PCI spans 197–365 (NFERALYFYE…GMVSFHDNPE (169 aa)). A disordered region spans residues 402–423 (QFVQKSMGSQEDDSGNKPSSYS). Ser407, Ser410, and Ser423 each carry phosphoserine.

This sequence belongs to the CSN3 family. Component of the CSN complex, composed of COPS1/GPS1, COPS2, COPS3, COPS4, COPS5, COPS6, COPS7 (COPS7A or COPS7B), COPS8 and COPS9. In the complex, it probably interacts directly with COPS1, COPS4, COPS8 and COPS9. Interacts with CK2 and PKD. Interacts with the translation initiation factor EIF3S6 and IKBKG. Interacts with ERCC6. In terms of tissue distribution, widely expressed.

It is found in the cytoplasm. The protein localises to the nucleus. Component of the COP9 signalosome complex (CSN), a complex involved in various cellular and developmental processes. The CSN complex is an essential regulator of the ubiquitin (Ubl) conjugation pathway by mediating the deneddylation of the cullin subunits of SCF-type E3 ligase complexes, leading to decrease the Ubl ligase activity of SCF-type complexes such as SCF, CSA or DDB2. The complex is also involved in phosphorylation of p53/TP53, c-jun/JUN, IkappaBalpha/NFKBIA, ITPK1 and IRF8/ICSBP, possibly via its association with CK2 and PKD kinases. CSN-dependent phosphorylation of TP53 and JUN promotes and protects degradation by the Ubl system, respectively. Essential to maintain the survival of epiblast cells and thus the development of the postimplantation embryo. In Mus musculus (Mouse), this protein is COP9 signalosome complex subunit 3 (Cops3).